The chain runs to 701 residues: Elongation factor G (701 aa).

Residues 11–287 enclose the tr-type G domain; it reads NKVRNIGIMA…AVVDYLPSPL (277 aa). GTP is bound by residues 20–27, 84–88, and 138–141; these read AHIDAGKT, DTPGH, and NKMD.

This sequence belongs to the TRAFAC class translation factor GTPase superfamily. Classic translation factor GTPase family. EF-G/EF-2 subfamily.

It is found in the cytoplasm. In terms of biological role, catalyzes the GTP-dependent ribosomal translocation step during translation elongation. During this step, the ribosome changes from the pre-translocational (PRE) to the post-translocational (POST) state as the newly formed A-site-bound peptidyl-tRNA and P-site-bound deacylated tRNA move to the P and E sites, respectively. Catalyzes the coordinated movement of the two tRNA molecules, the mRNA and conformational changes in the ribosome. This is Elongation factor G from Mycobacterium sp. (strain JLS).